A 395-amino-acid chain; its full sequence is MHVRAPWSLPEPTLAYFPNARFVPSDRDLGAGALRLVGEDCPAPTRGGVAVADGPTEPGFNDFHHVPVLAQRCVELLRPALTRHHADGSEAVLVDATIGAGGHAERFLTELPGLRLIGLDRDPSALEIVRTRLARFADRVTLVHTRYDGLASALTELGYGAAQSIDGALFDLGVSSMQLDQAERGFAYSKDAPLDMRMNPQSALSAADIINTYDEAALADILHRYGEERFARRIAARIIRRRADKPFTTTAELVALLYEAIPAAARRTGGHPAKRTFQALRIAVNDELGSLRSAIPAAMDALAVGGRIVVMAYQSLEDRIVKRVFADAVASRTPMDLPVELPGHGPRFRSLTHGAERADAAEVERNPRSAPVRLRALERLELEALPRQGTGKGES.

Residues 101–103 (GGH), aspartate 120, tyrosine 147, aspartate 171, and glutamine 178 contribute to the S-adenosyl-L-methionine site.

The protein belongs to the methyltransferase superfamily. RsmH family.

It localises to the cytoplasm. The enzyme catalyses cytidine(1402) in 16S rRNA + S-adenosyl-L-methionine = N(4)-methylcytidine(1402) in 16S rRNA + S-adenosyl-L-homocysteine + H(+). Specifically methylates the N4 position of cytidine in position 1402 (C1402) of 16S rRNA. This chain is Ribosomal RNA small subunit methyltransferase H, found in Mycobacterium marinum (strain ATCC BAA-535 / M).